We begin with the raw amino-acid sequence, 102 residues long: Small ribosomal subunit protein uS10 (102 aa).

It belongs to the universal ribosomal protein uS10 family. In terms of assembly, part of the 30S ribosomal subunit.

In terms of biological role, involved in the binding of tRNA to the ribosomes. The chain is Small ribosomal subunit protein uS10 from Leifsonia xyli subsp. xyli (strain CTCB07).